A 556-amino-acid chain; its full sequence is Formate--tetrahydrofolate ligase (556 aa).

65–72 (TPAGEGKS) serves as a coordination point for ATP.

The protein belongs to the formate--tetrahydrofolate ligase family.

It carries out the reaction (6S)-5,6,7,8-tetrahydrofolate + formate + ATP = (6R)-10-formyltetrahydrofolate + ADP + phosphate. It participates in one-carbon metabolism; tetrahydrofolate interconversion. This Streptococcus pneumoniae serotype 19F (strain G54) protein is Formate--tetrahydrofolate ligase.